Consider the following 432-residue polypeptide: Adenylosuccinate synthetase (432 aa).

GTP-binding positions include G12 to K18 and G40 to T42. D13 functions as the Proton acceptor in the catalytic mechanism. Mg(2+) contacts are provided by D13 and G40. IMP-binding positions include D13 to K16, N38 to H41, T130, R144, Q225, T240, and R304. H41 acts as the Proton donor in catalysis. Substrate is bound at residue A300–R306. Residues R306, K332 to D334, and S414 to G416 each bind GTP.

Belongs to the adenylosuccinate synthetase family. As to quaternary structure, homodimer. Requires Mg(2+) as cofactor.

It localises to the cytoplasm. The catalysed reaction is IMP + L-aspartate + GTP = N(6)-(1,2-dicarboxyethyl)-AMP + GDP + phosphate + 2 H(+). It participates in purine metabolism; AMP biosynthesis via de novo pathway; AMP from IMP: step 1/2. Plays an important role in the de novo pathway of purine nucleotide biosynthesis. Catalyzes the first committed step in the biosynthesis of AMP from IMP. The chain is Adenylosuccinate synthetase from Anaeromyxobacter dehalogenans (strain 2CP-1 / ATCC BAA-258).